The sequence spans 896 residues: Alanine--tRNA ligase (896 aa).

Zn(2+) contacts are provided by histidine 599, histidine 603, cysteine 707, and histidine 711.

Belongs to the class-II aminoacyl-tRNA synthetase family. Requires Zn(2+) as cofactor.

It localises to the cytoplasm. The catalysed reaction is tRNA(Ala) + L-alanine + ATP = L-alanyl-tRNA(Ala) + AMP + diphosphate. Functionally, catalyzes the attachment of alanine to tRNA(Ala) in a two-step reaction: alanine is first activated by ATP to form Ala-AMP and then transferred to the acceptor end of tRNA(Ala). Also edits incorrectly charged Ser-tRNA(Ala) and Gly-tRNA(Ala) via its editing domain. This is Alanine--tRNA ligase from Pyrobaculum calidifontis (strain DSM 21063 / JCM 11548 / VA1).